Consider the following 199-residue polypeptide: Elongation factor Ts, chloroplastic (199 aa).

Belongs to the EF-Ts family.

It is found in the plastid. It localises to the chloroplast. Its function is as follows. Associates with the EF-Tu.GDP complex and induces the exchange of GDP to GTP. It remains bound to the aminoacyl-tRNA.EF-Tu.GTP complex up to the GTP hydrolysis stage on the ribosome. This Galdieria sulphuraria (Red alga) protein is Elongation factor Ts, chloroplastic (tsf).